The following is a 211-amino-acid chain: Pyridoxine/pyridoxamine 5'-phosphate oxidase (211 aa).

Residues 7–10 (RRDY) and K65 each bind substrate. FMN is bound by residues 60–65 (RIVLLK), 75–76 (YT), R81, K82, and Q104. Substrate is bound by residues Y122, R126, and S130. FMN contacts are provided by residues 139-140 (QS) and W184. 190-192 (RLH) lines the substrate pocket. R194 provides a ligand contact to FMN.

The protein belongs to the pyridoxamine 5'-phosphate oxidase family. In terms of assembly, homodimer. It depends on FMN as a cofactor.

The enzyme catalyses pyridoxamine 5'-phosphate + O2 + H2O = pyridoxal 5'-phosphate + H2O2 + NH4(+). It catalyses the reaction pyridoxine 5'-phosphate + O2 = pyridoxal 5'-phosphate + H2O2. The protein operates within cofactor metabolism; pyridoxal 5'-phosphate salvage; pyridoxal 5'-phosphate from pyridoxamine 5'-phosphate: step 1/1. Its pathway is cofactor metabolism; pyridoxal 5'-phosphate salvage; pyridoxal 5'-phosphate from pyridoxine 5'-phosphate: step 1/1. Its function is as follows. Catalyzes the oxidation of either pyridoxine 5'-phosphate (PNP) or pyridoxamine 5'-phosphate (PMP) into pyridoxal 5'-phosphate (PLP). This chain is Pyridoxine/pyridoxamine 5'-phosphate oxidase, found in Aliivibrio salmonicida (strain LFI1238) (Vibrio salmonicida (strain LFI1238)).